Consider the following 1068-residue polypeptide: Huntingtin-interacting protein 1-related protein (1068 aa).

An N-acetylmethionine modification is found at Met1. Residues 23–151 (EREQFDKTQA…SFHLKHPQFP (129 aa)) enclose the ENTH domain. A coiled-coil region spans residues 346-644 (GSMKDDRDLQ…LQDAVSKLDD (299 aa)). Positions 582-610 (EALSQEQQRSSQEKGELRGQLAEKESQEQ) are disordered. The span at 592–608 (SQEKGELRGQLAEKESQ) shows a compositional bias: basic and acidic residues. In terms of domain architecture, I/LWEQ spans 771–1012 (SLDVRQEELG…ELRKQHYVLA (242 aa)). The important for actin binding stretch occupies residues 867–924 (RWTEGLISASKAVGWGATQLVESADKVVLHMGKYEELIVCSHEIAASTAQLVAASKVK). Residues 1011–1068 (LAGGMGTPSEEEPSRPSPAPRSGATKKPPLAQKPSIAPRTDNQLDKKDGVYPAQLVNY) are disordered.

The protein belongs to the SLA2 family. Homodimer. Interacts with actin; homodimerization promotes actin binding. Interacts with CLTB. Interacts with HIP1. Interacts (via ENTH and I/LWEQ domains) with BCL2L10. As to expression, widely expressed. Expressed at lower levels in skeletal muscle and heart. The level of expression does not change appreciably during development.

It is found in the cytoplasm. The protein localises to the perinuclear region. Its subcellular location is the endomembrane system. The protein resides in the cytoplasmic vesicle. It localises to the clathrin-coated vesicle membrane. In terms of biological role, component of clathrin-coated pits and vesicles, that may link the endocytic machinery to the actin cytoskeleton. Binds 3-phosphoinositides (via ENTH domain). May act through the ENTH domain to promote cell survival by stabilizing receptor tyrosine kinases following ligand-induced endocytosis. The sequence is that of Huntingtin-interacting protein 1-related protein (Hip1r) from Mus musculus (Mouse).